Reading from the N-terminus, the 214-residue chain is Protein-L-isoaspartate O-methyltransferase (214 aa).

The active site involves serine 63.

Belongs to the methyltransferase superfamily. L-isoaspartyl/D-aspartyl protein methyltransferase family.

Its subcellular location is the cytoplasm. It catalyses the reaction [protein]-L-isoaspartate + S-adenosyl-L-methionine = [protein]-L-isoaspartate alpha-methyl ester + S-adenosyl-L-homocysteine. Functionally, catalyzes the methyl esterification of L-isoaspartyl residues in peptides and proteins that result from spontaneous decomposition of normal L-aspartyl and L-asparaginyl residues. It plays a role in the repair and/or degradation of damaged proteins. The chain is Protein-L-isoaspartate O-methyltransferase from Maridesulfovibrio salexigens (strain ATCC 14822 / DSM 2638 / NCIMB 8403 / VKM B-1763) (Desulfovibrio salexigens).